A 131-amino-acid chain; its full sequence is Acidic leucine-rich nuclear phosphoprotein 32 family member D (131 aa).

LRR repeat units lie at residues 18-38, 43-64, 65-87, 89-110, and 114-131; these read DVKE…EGLT, ELEL…PKLN, KLKK…AEKC, NLIH…EPLK, and NLES…LNNY.

It belongs to the ANP32 family.

In Homo sapiens (Human), this protein is Acidic leucine-rich nuclear phosphoprotein 32 family member D (ANP32D).